The primary structure comprises 310 residues: Homeobox protein Hox-A13a (310 aa).

The segment at residues 244 to 303 (GRKKRVPYTKVQLKELEREYATNKFITKDKRRRISAQTNLSERQVTIWFQNRRVKEKKVV) is a DNA-binding region (homeobox).

This sequence belongs to the Abd-B homeobox family.

It is found in the nucleus. Its function is as follows. Sequence-specific transcription factor which is part of a developmental regulatory system that provides cells with specific positional identities on the anterior-posterior axis. The polypeptide is Homeobox protein Hox-A13a (hoxa13a) (Danio rerio (Zebrafish)).